We begin with the raw amino-acid sequence, 271 residues long: Elongation factor Ts (271 aa).

Positions Thr76 to Val79 are involved in Mg(2+) ion dislocation from EF-Tu.

The protein belongs to the EF-Ts family.

It localises to the cytoplasm. Functionally, associates with the EF-Tu.GDP complex and induces the exchange of GDP to GTP. It remains bound to the aminoacyl-tRNA.EF-Tu.GTP complex up to the GTP hydrolysis stage on the ribosome. The protein is Elongation factor Ts of Mycobacterium bovis (strain BCG / Pasteur 1173P2).